The following is a 1038-amino-acid chain: Ras GTPase-activating protein 1 (1038 aa).

Position 1 is an N-acetylmethionine (Met1). Residues 1-16 (MMAAEAGSEEGGPATA) are compositionally biased toward low complexity. Disordered stretches follow at residues 1–24 (MMAA…AAAT) and 117–152 (ETLG…SLDG). Positions 124 to 135 (GFPPLPPPPLLP) are enriched in pro residues. The region spanning 172 to 263 (WYHGKLDRTI…LKGEKLLYPV (92 aa)) is the SH2 1 domain. The SH3 domain occupies 270–332 (EDRRRVRAIL…VEDLVEEVGR (63 aa)). The SH2 2 domain maps to 342–432 (WFHGKISKQE…VEGYYLKEPV (91 aa)). In terms of domain architecture, PH spans 465–568 (NIVKKGYLLK…WMKGLQAFCS (104 aa)). Residues 568–681 (SLRKSSPGTS…QKGHATDEWF (114 aa)) form the C2 domain. Tyr606 bears the Phosphotyrosine mark. The Ras-GAP domain maps to 755 to 965 (KLESLLLCTL…HRMIMFLDEL (211 aa)). Ser822 carries the phosphoserine modification.

In terms of assembly, interacts with SQSTM1. Interacts with SPSB1; the interaction does not promote degradation. Interacts with CAV2 (tyrosine phosphorylated form). Directly interacts with NCK1. Interacts with PDGFRB (tyrosine phosphorylated). Interacts (via SH2 domain) with the 'Tyr-9' phosphorylated form of PDPK1. Interacts with tyrosine-phosphorylated EPHB4. In terms of processing, phosphorylated by SRC and LCK. The phosphorylation SRC inhibits its ability to stimulate the Ras-GTPase activity, whereas phosphorylation by LCK does not display any effect on stimulation activity.

The protein resides in the cytoplasm. Its function is as follows. Inhibitory regulator of the Ras-cyclic AMP pathway. Stimulates the GTPase of normal but not oncogenic Ras p21. This is Ras GTPase-activating protein 1 (Rasa1) from Rattus norvegicus (Rat).